We begin with the raw amino-acid sequence, 311 residues long: Glycine--tRNA ligase alpha subunit (311 aa).

Belongs to the class-II aminoacyl-tRNA synthetase family. As to quaternary structure, tetramer of two alpha and two beta subunits.

Its subcellular location is the cytoplasm. It carries out the reaction tRNA(Gly) + glycine + ATP = glycyl-tRNA(Gly) + AMP + diphosphate. This chain is Glycine--tRNA ligase alpha subunit, found in Bradyrhizobium diazoefficiens (strain JCM 10833 / BCRC 13528 / IAM 13628 / NBRC 14792 / USDA 110).